The following is a 160-amino-acid chain: Cyclic pyranopterin monophosphate synthase (160 aa).

Residues 75–77 (LCH) and 113–114 (ME) contribute to the substrate site. The active site involves Asp-128.

This sequence belongs to the MoaC family. In terms of assembly, homohexamer; trimer of dimers.

The enzyme catalyses (8S)-3',8-cyclo-7,8-dihydroguanosine 5'-triphosphate = cyclic pyranopterin phosphate + diphosphate. Its pathway is cofactor biosynthesis; molybdopterin biosynthesis. In terms of biological role, catalyzes the conversion of (8S)-3',8-cyclo-7,8-dihydroguanosine 5'-triphosphate to cyclic pyranopterin monophosphate (cPMP). The chain is Cyclic pyranopterin monophosphate synthase from Methylobacterium sp. (strain 4-46).